Reading from the N-terminus, the 352-residue chain is Delta(7)-sterol 5(6)-desaturas erg3A (352 aa).

N-linked (GlcNAc...) asparagine glycosylation is present at asparagine 39. The next 3 membrane-spanning stretches (helical) occupy residues 82 to 102 (FLSF…ISAT), 128 to 147 (IAQT…PFLV), and 167 to 187 (YYSI…IYWI). Residues 174-299 (PLFIAFTDFC…FTTLWDRLGG (126 aa)) enclose the Fatty acid hydroxylase domain. Positions 188–192 (HRGLH) match the Histidine box-1 motif. The Histidine box-2 signature appears at 201–205 (HKPHH). The helical transmembrane segment at 231–251 (HVFPFIFPLQKLAYVFLFGFI) threads the bilayer. A Histidine box-3 motif is present at residues 276 to 280 (HTMHH).

This sequence belongs to the sterol desaturase family. Requires Fe cation as cofactor.

The protein localises to the endoplasmic reticulum membrane. Functionally, delta(7)-sterol 5(6)-desaturase; part of the third module of ergosterol biosynthesis pathway that includes the late steps of the pathway. Erg3A is a minor delta(7)-sterol 5(6)-desaturase within the ergosterol pathway, erg3B being the major one. The third module or late pathway involves the ergosterol synthesis itself through consecutive reactions that mainly occur in the endoplasmic reticulum (ER) membrane. Firstly, the squalene synthase erg9 catalyzes the condensation of 2 farnesyl pyrophosphate moieties to form squalene, which is the precursor of all steroids. Squalene synthase is crucial for balancing the incorporation of farnesyl diphosphate (FPP) into sterol and nonsterol isoprene synthesis. Secondly, squalene is converted into lanosterol by the consecutive action of the squalene epoxidase erg1 and the lanosterol synthase erg7. Then, the delta(24)-sterol C-methyltransferase erg6 methylates lanosterol at C-24 to produce eburicol. Eburicol is the substrate of the sterol 14-alpha demethylase encoded by cyp51A and cyp51B, to yield 4,4,24-trimethyl ergosta-8,14,24(28)-trienol. The C-14 reductase erg24 then reduces the C14=C15 double bond which leads to 4,4-dimethylfecosterol. A sequence of further demethylations at C-4, involving the C-4 demethylation complex containing the C-4 methylsterol oxidases erg25A or erg25B, the sterol-4-alpha-carboxylate 3-dehydrogenase erg26 and the 3-keto-steroid reductase erg27, leads to the production of fecosterol via 4-methylfecosterol. The C-8 sterol isomerase erg2 then catalyzes the reaction which results in unsaturation at C-7 in the B ring of sterols and thus converts fecosterol to episterol. The sterol-C5-desaturase erg3B then catalyzes the introduction of a C-5 double bond in the B ring to produce 5-dehydroepisterol. The 2 other sterol-C5-desaturases, erg3A and erg3C, seem to be less important in ergosterol biosynthesis. The C-22 sterol desaturase erg5 further converts 5-dehydroepisterol into ergosta-5,7,22,24(28)-tetraen-3beta-ol by forming the C-22(23) double bond in the sterol side chain. Finally, ergosta-5,7,22,24(28)-tetraen-3beta-ol is substrate of the C-24(28) sterol reductases erg4A and erg4B to produce ergosterol. Possible alternative sterol biosynthetic pathways might exist from fecosterol to ergosterol, depending on the activities of the erg3 isoforms. The sequence is that of Delta(7)-sterol 5(6)-desaturas erg3A from Aspergillus fumigatus (strain ATCC MYA-4609 / CBS 101355 / FGSC A1100 / Af293) (Neosartorya fumigata).